We begin with the raw amino-acid sequence, 86 residues long: Large ribosomal subunit protein bL27 (86 aa).

A disordered region spans residues 1–22; the sequence is MATKKAGGSSRNGRDSAGRRLG.

It belongs to the bacterial ribosomal protein bL27 family.

The protein is Large ribosomal subunit protein bL27 of Rickettsia rickettsii (strain Iowa).